The following is a 199-amino-acid chain: Ras-related and estrogen-regulated growth inhibitor (199 aa).

GTP is bound by residues 13 to 20 (GRAGVGKS), 60 to 64 (DTAGQ), and 118 to 121 (NKAD).

It belongs to the small GTPase superfamily. Ras family.

It is found in the cytoplasm. It catalyses the reaction GTP + H2O = GDP + phosphate + H(+). In terms of biological role, binds GDP/GTP and possesses intrinsic GTPase activity. Has higher affinity for GDP than for GTP. The polypeptide is Ras-related and estrogen-regulated growth inhibitor (RERG) (Bos taurus (Bovine)).